The following is a 205-amino-acid chain: Holliday junction branch migration complex subunit RuvA (205 aa).

The tract at residues 1–67 (MITSIFGKVT…QIIEEAFAFN (67 aa)) is domain I. The domain II stretch occupies residues 68–146 (TLEEKEWFCR…NNKNIKGVQV (79 aa)). The tract at residues 147-150 (ADGY) is flexible linker. The interval 150–205 (YDELFETLKSLGYKQQEIQDALKMIEVKPDFDISQLVAEVIKLMSFKNNEITNKTA) is domain III.

It belongs to the RuvA family. As to quaternary structure, homotetramer. Forms an RuvA(8)-RuvB(12)-Holliday junction (HJ) complex. HJ DNA is sandwiched between 2 RuvA tetramers; dsDNA enters through RuvA and exits via RuvB. An RuvB hexamer assembles on each DNA strand where it exits the tetramer. Each RuvB hexamer is contacted by two RuvA subunits (via domain III) on 2 adjacent RuvB subunits; this complex drives branch migration. In the full resolvosome a probable DNA-RuvA(4)-RuvB(12)-RuvC(2) complex forms which resolves the HJ.

It localises to the cytoplasm. The RuvA-RuvB-RuvC complex processes Holliday junction (HJ) DNA during genetic recombination and DNA repair, while the RuvA-RuvB complex plays an important role in the rescue of blocked DNA replication forks via replication fork reversal (RFR). RuvA specifically binds to HJ cruciform DNA, conferring on it an open structure. The RuvB hexamer acts as an ATP-dependent pump, pulling dsDNA into and through the RuvAB complex. HJ branch migration allows RuvC to scan DNA until it finds its consensus sequence, where it cleaves and resolves the cruciform DNA. The sequence is that of Holliday junction branch migration complex subunit RuvA from Mycoplasma genitalium (strain ATCC 33530 / DSM 19775 / NCTC 10195 / G37) (Mycoplasmoides genitalium).